The chain runs to 57 residues: Large ribosomal subunit protein bL32 (57 aa).

It belongs to the bacterial ribosomal protein bL32 family.

The chain is Large ribosomal subunit protein bL32 from Mycolicibacterium gilvum (strain PYR-GCK) (Mycobacterium gilvum (strain PYR-GCK)).